Here is a 139-residue protein sequence, read N- to C-terminus: Protein GOS9 (139 aa).

Residues 5-139 (LVKIGTWGGN…VDSIGVYVHI (135 aa)) form the Jacalin-type lectin domain.

Expressed mainly in roots.

The sequence is that of Protein GOS9 (GOS9) from Oryza sativa subsp. indica (Rice).